The following is a 124-amino-acid chain: Large ribosomal subunit protein bL12c (124 aa).

The protein belongs to the bacterial ribosomal protein bL12 family. As to quaternary structure, homodimer. Part of the ribosomal stalk of the 50S ribosomal subunit. Forms a multimeric L10(L12)X complex, where L10 forms an elongated spine to which 2 to 4 L12 dimers bind in a sequential fashion. Binds GTP-bound translation factors.

It localises to the plastid. It is found in the chloroplast. In terms of biological role, forms part of the ribosomal stalk which helps the ribosome interact with GTP-bound translation factors. Is thus essential for accurate translation. The sequence is that of Large ribosomal subunit protein bL12c from Cyanidioschyzon merolae (strain NIES-3377 / 10D) (Unicellular red alga).